A 156-amino-acid chain; its full sequence is Keratin, high-sulfur matrix protein, B2B (156 aa).

Position 1 is an N-acetylalanine (Ala-1). 4 repeats span residues 26 to 35 (PTCSQTSCCQ), 36 to 45 (PTSIQTSCCQ), 46 to 55 (PISIQTSCCQ), and 56 to 65 (PTCLQTSGCE).

In terms of biological role, the keratin products of mammalian epidermal derivatives such as wool and hair consist of microfibrils embedded in a rigid matrix of other proteins. The matrix proteins include the high-sulfur and high-tyrosine keratins, having molecular weights of 6-20 kDa, whereas the microfibrils contain the larger, low-sulfur keratins (40-56 kDa). The sequence is that of Keratin, high-sulfur matrix protein, B2B from Ovis aries (Sheep).